A 465-amino-acid chain; its full sequence is Sodium-dependent phosphate transport protein 1 (465 aa).

Asn-39, Asn-47, and Asn-56 each carry an N-linked (GlcNAc...) asparagine glycan. The next 10 helical transmembrane spans lie at 79–99 (GLVLSSVFLGMVVIQVPVGYL), 117–137 (SVLSLLIPPAAQVGAALVIVC), 176–196 (FVMGPFIALLVSGFICDLLGW), 199–219 (VFYIFGIVGCVLSLFWFILLF), 260–280 (LPLWAIILNSFAFIWSNNLLV), 299–319 (GLLSSLPYLLAYICGIVAGQM), 337–357 (LFTTLGIFCPVIFVVCLLYLS), 363–383 (TVIFLTLANSTLSFSFCGQLI), 399–419 (VTALIGIFGGLISSTLAGLIL), and 431–451 (FFLMAGINVTCLAFYLLFAKG).

It belongs to the major facilitator superfamily. Sodium/anion cotransporter family. In terms of assembly, interacts with PDZK1.

Its subcellular location is the apical cell membrane. It catalyses the reaction 3 Na(+)(out) + phosphate(out) = 3 Na(+)(in) + phosphate(in). It carries out the reaction urate(out) = urate(in). Its function is as follows. Important for the resorption of phosphate by the kidney. May be involved in actively transporting phosphate into cells via Na(+) cotransport in the renal brush border membrane. Plays a role in urate transport in the kidney. The protein is Sodium-dependent phosphate transport protein 1 (Slc17a1) of Rattus norvegicus (Rat).